A 466-amino-acid polypeptide reads, in one-letter code: 55 kDa erythrocyte membrane protein (466 aa).

The residue at position 2 (Thr-2) is an N-acetylthreonine. Ser-13 and Ser-19 each carry phosphoserine. Thr-49 is modified (phosphothreonine). Phosphoserine is present on residues Ser-52, Ser-57, and Ser-110. A PDZ domain is found at 71-152 (LIQIEKVTEE…MISLKVIPNQ (82 aa)). The SH3 domain occupies 158 to 228 (ALQMFMRAQF…PSPELQEWRV (71 aa)). Ser-243 is subject to Phosphoserine. The interval 268-466 (VVSYEEVVRL…PQWVPVSWVY (199 aa)) is interaction with PALS1. The 170-residue stretch at 282 to 451 (RKTLVLIGAS…TLKKLQEAFD (170 aa)) folds into the Guanylate kinase-like domain.

Belongs to the MAGUK family. As to quaternary structure, heterodimer with PALS1. Interacts with DLG5 and NF2. Interacts (via guanylate kinase-like domain) with WHRN (via third PDZ domain). In terms of processing, palmitoylated.

It localises to the cell membrane. Its subcellular location is the cell projection. The protein resides in the stereocilium. Essential regulator of neutrophil polarity. Regulates neutrophil polarization by regulating AKT1 phosphorylation through a mechanism that is independent of PIK3CG activity. The chain is 55 kDa erythrocyte membrane protein (MPP1) from Papio anubis (Olive baboon).